The chain runs to 349 residues: Phosphoribosylformylglycinamidine cyclo-ligase (349 aa).

The protein belongs to the AIR synthase family.

It localises to the cytoplasm. The catalysed reaction is 2-formamido-N(1)-(5-O-phospho-beta-D-ribosyl)acetamidine + ATP = 5-amino-1-(5-phospho-beta-D-ribosyl)imidazole + ADP + phosphate + H(+). It functions in the pathway purine metabolism; IMP biosynthesis via de novo pathway; 5-amino-1-(5-phospho-D-ribosyl)imidazole from N(2)-formyl-N(1)-(5-phospho-D-ribosyl)glycinamide: step 2/2. This is Phosphoribosylformylglycinamidine cyclo-ligase from Bordetella petrii (strain ATCC BAA-461 / DSM 12804 / CCUG 43448).